Here is a 360-residue protein sequence, read N- to C-terminus: MIGNRVINLLIVATLALAGQTVLALELGQDCVNPVGEAGKCVLFRECQPLVDIYNKPVNTPDDTQFLTESRCGLYERKTLVCCAGVRSKGKTSLPESPNCGVQLTDRVIGGQPTKIDEFPWTALIEYEKPNGRFGFHCGGSVINERYILTAAHCITSIPRGWKVHRVRLGEWDLSSTTDQEDDFYADAPIDLDIEKIIVHPGYNLQDKSHHNDIALIRFNREINYSSTISAICLPLSNSLRNRKHAGLSSYAAGWGKTETASASQKKLKVELTVVDVKDCSPAYQRNGISLDSTQMCAGGIRGKDTCSGDSGGPLMRQMSGSWYLIGVVSFGPQKCGAPGVPGVYTNVAEYVDWIKDNIY.

Residues 1 to 24 form the signal peptide; it reads MIGNRVINLLIVATLALAGQTVLA. Residues 30–83 enclose the Clip domain; sequence DCVNPVGEAGKCVLFRECQPLVDIYNKPVNTPDDTQFLTESRCGLYERKTLVCC. Disulfide bonds link Cys31–Cys82, Cys41–Cys72, Cys47–Cys83, and Cys138–Cys154. Positions 108-360 constitute a Peptidase S1 domain; that stretch reads VIGGQPTKID…YVDWIKDNIY (253 aa). Catalysis depends on charge relay system residues His153 and Asp213. Residue Asn224 is glycosylated (N-linked (GlcNAc...) asparagine). 2 disulfide bridges follow: Cys280–Cys297 and Cys307–Cys336. Ser311 serves as the catalytic Charge relay system.

Belongs to the peptidase S1 family. CLIP subfamily. As to quaternary structure, interacts with SRPN2 in the hemolymph of immune-challenged female mosquitoes; the interaction results in CLIPB4 inhibition. In terms of tissue distribution, in females, expressed in fat body, cuticle, thorax and ovaries.

It is found in the secreted. In terms of biological role, serine protease which plays a role in the innate immune response against protozoan and bacterial pathogens, such as Plasmodium bergei, Staphylococcus aureus, Micrococcus luteus and Escherichia coli, by activating the melanization cascade. Cleaves and activates CLIPB8. In the resistant strain L3-5, involved in the melanization of killed parasite P.berghei ookinetes which results in their clearance. In the susceptible strain G3, appears to be dispensable for ookinete elimination which occurs by lysis. In Anopheles gambiae (African malaria mosquito), this protein is CLIP domain-containing serine protease B4.